Consider the following 391-residue polypeptide: Probable sugar efflux transporter (391 aa).

12 helical membrane passes run 16-36, 51-71, 82-102, 103-123, 138-158, 171-191, 210-230, 247-267, 277-297, 300-320, 338-358, and 361-381; these read VFVF…PVAL, VGLM…PLML, LLFL…AWNF, WVLL…WSIT, QALG…LPLG, FGVI…LLPP, PLLM…FTTY, ITTL…FLFG, FIAF…VFKN, WVIF…TIAL, IFSG…SIVI, and LGLG…LFWL.

The protein belongs to the major facilitator superfamily. SotB (TC 2.A.1.2) family.

The protein localises to the cell inner membrane. Functionally, involved in the efflux of sugars. The physiological role may be the reduction of the intracellular concentration of toxic sugars or sugar metabolites. In Helicobacter pylori (strain G27), this protein is Probable sugar efflux transporter.